The primary structure comprises 509 residues: ATP synthase subunit alpha (509 aa).

Position 169 to 176 (169 to 176 (GDRQTGKT)) interacts with ATP.

This sequence belongs to the ATPase alpha/beta chains family. F-type ATPases have 2 components, CF(1) - the catalytic core - and CF(0) - the membrane proton channel. CF(1) has five subunits: alpha(3), beta(3), gamma(1), delta(1), epsilon(1). CF(0) has three main subunits: a(1), b(2) and c(9-12). The alpha and beta chains form an alternating ring which encloses part of the gamma chain. CF(1) is attached to CF(0) by a central stalk formed by the gamma and epsilon chains, while a peripheral stalk is formed by the delta and b chains.

It is found in the cell inner membrane. It carries out the reaction ATP + H2O + 4 H(+)(in) = ADP + phosphate + 5 H(+)(out). Produces ATP from ADP in the presence of a proton gradient across the membrane. The alpha chain is a regulatory subunit. In Novosphingobium aromaticivorans (strain ATCC 700278 / DSM 12444 / CCUG 56034 / CIP 105152 / NBRC 16084 / F199), this protein is ATP synthase subunit alpha.